Reading from the N-terminus, the 92-residue chain is Sec-independent protein translocase protein TatA (92 aa).

A helical membrane pass occupies residues 1 to 21 (MGIFDWKHWIVILVVVVLVFG). The tract at residues 43–92 (MNDDEKPADPTVTPAQPVPPVQPQATAQANPPHTIDVQAQKVEEPIRKDV) is disordered. Residues 65–74 (PQATAQANPP) are compositionally biased toward low complexity. Positions 83–92 (KVEEPIRKDV) are enriched in basic and acidic residues.

Belongs to the TatA/E family. The Tat system comprises two distinct complexes: a TatABC complex, containing multiple copies of TatA, TatB and TatC subunits, and a separate TatA complex, containing only TatA subunits. Substrates initially bind to the TatABC complex, which probably triggers association of the separate TatA complex to form the active translocon.

The protein localises to the cell inner membrane. Its function is as follows. Part of the twin-arginine translocation (Tat) system that transports large folded proteins containing a characteristic twin-arginine motif in their signal peptide across membranes. TatA could form the protein-conducting channel of the Tat system. In Pseudomonas fluorescens (strain Pf0-1), this protein is Sec-independent protein translocase protein TatA.